Consider the following 34-residue polypeptide: Photosystem II reaction center protein M (34 aa).

A helical membrane pass occupies residues 5–25; that stretch reads ILAFIATALFILVPTAFLLII.

It belongs to the PsbM family. PSII is composed of 1 copy each of membrane proteins PsbA, PsbB, PsbC, PsbD, PsbE, PsbF, PsbH, PsbI, PsbJ, PsbK, PsbL, PsbM, PsbT, PsbX, PsbY, PsbZ, Psb30/Ycf12, at least 3 peripheral proteins of the oxygen-evolving complex and a large number of cofactors. It forms dimeric complexes.

It localises to the plastid. The protein localises to the chloroplast thylakoid membrane. Functionally, one of the components of the core complex of photosystem II (PSII). PSII is a light-driven water:plastoquinone oxidoreductase that uses light energy to abstract electrons from H(2)O, generating O(2) and a proton gradient subsequently used for ATP formation. It consists of a core antenna complex that captures photons, and an electron transfer chain that converts photonic excitation into a charge separation. This subunit is found at the monomer-monomer interface. The polypeptide is Photosystem II reaction center protein M (Buxus microphylla (Littleleaf boxwood)).